We begin with the raw amino-acid sequence, 66 residues long: Large ribosomal subunit protein bL35 (66 aa).

It belongs to the bacterial ribosomal protein bL35 family.

This Phenylobacterium zucineum (strain HLK1) protein is Large ribosomal subunit protein bL35.